The chain runs to 278 residues: Expansin-B17 (278 aa).

An N-terminal signal peptide occupies residues 1–26 (MAAASSRSFSLCVLLLLLLLAPPISA). In terms of domain architecture, Expansin-like EG45 spans 66–176 (GGACGYGSLV…RRTACKYGGK (111 aa)). 3 cysteine pairs are disulfide-bonded: Cys69–Cys98, Cys101–Cys171, and Cys106–Cys112. The Expansin-like CBD domain maps to 189–270 (FWLSLLVEFE…NWKPTATYTS (82 aa)).

It belongs to the expansin family. Expansin B subfamily.

The protein localises to the secreted. It localises to the cell wall. Its subcellular location is the membrane. Its function is as follows. May cause loosening and extension of plant cell walls by disrupting non-covalent bonding between cellulose microfibrils and matrix glucans. No enzymatic activity has been found. May be required for rapid internodal elongation in deepwater rice during submergence. This chain is Expansin-B17 (EXPB17), found in Oryza sativa subsp. japonica (Rice).